The sequence spans 76 residues: uncharacterized protein (76 aa).

Residues 20-42 form a helical membrane-spanning segment; the sequence is GIVWGPKLAPWGITLGLGAFYFF.

The protein resides in the membrane. This is an uncharacterized protein from Dictyostelium discoideum (Social amoeba).